Consider the following 170-residue polypeptide: Putative calmodulin-like protein 6 (170 aa).

EF-hand domains lie at 8-43, 44-79, 84-119, and 120-155; these read QQIS…LGMA, PSQE…KLYE, DDEE…LGEE, and MTED…TWNI. Aspartate 21, asparagine 23, aspartate 25, cysteine 27, glutamate 32, aspartate 57, aspartate 59, asparagine 61, threonine 63, glutamate 68, aspartate 97, aspartate 99, asparagine 101, glutamate 108, aspartate 133, asparagine 135, aspartate 137, glutamine 139, and glutamate 144 together coordinate Ca(2+).

The protein belongs to the calmodulin family.

Functionally, potential calcium sensor. This chain is Putative calmodulin-like protein 6 (CML6), found in Oryza sativa subsp. japonica (Rice).